A 720-amino-acid chain; its full sequence is 1,4-alpha-glucan branching enzyme GlgB 2 (720 aa).

Aspartate 398 serves as the catalytic Nucleophile. Glutamate 451 serves as the catalytic Proton donor.

This sequence belongs to the glycosyl hydrolase 13 family. GlgB subfamily. Monomer.

The catalysed reaction is Transfers a segment of a (1-&gt;4)-alpha-D-glucan chain to a primary hydroxy group in a similar glucan chain.. It participates in glycan biosynthesis; glycogen biosynthesis. Functionally, catalyzes the formation of the alpha-1,6-glucosidic linkages in glycogen by scission of a 1,4-alpha-linked oligosaccharide from growing alpha-1,4-glucan chains and the subsequent attachment of the oligosaccharide to the alpha-1,6 position. This chain is 1,4-alpha-glucan branching enzyme GlgB 2, found in Xanthomonas oryzae pv. oryzae (strain KACC10331 / KXO85).